The following is a 347-amino-acid chain: NADH-ubiquinone oxidoreductase chain 2 (347 aa).

10 consecutive transmembrane segments (helical) span residues 3 to 23 (PIIYTTLIMTVMSGTMLVMIS), 25 to 45 (HWLLIWIGFEMNLLAMIPVLM), 59 to 79 (YFLTQATASMMLMMAIIINLL), 89 to 109 (MFNPVAMTMMTMALAMKLGLS), 149 to 169 (INPNLMLTMAMLSILIGGWGG), 178 to 198 (IMAYSSIAHMGWMTAVLPYNT), 200 to 220 (MTILNLLIYITMTLAMFMLLI), 237 to 257 (MPVITSLMMVTLLSMGGLPPL), 274 to 294 (ESIIMPTLMAMTALLNLYFYM), and 325 to 345 (LLPTMIVLSTLVLPMTPALSS).

This sequence belongs to the complex I subunit 2 family. As to quaternary structure, core subunit of respiratory chain NADH dehydrogenase (Complex I) which is composed of 45 different subunits. Interacts with TMEM242.

It is found in the mitochondrion inner membrane. The catalysed reaction is a ubiquinone + NADH + 5 H(+)(in) = a ubiquinol + NAD(+) + 4 H(+)(out). Core subunit of the mitochondrial membrane respiratory chain NADH dehydrogenase (Complex I) which catalyzes electron transfer from NADH through the respiratory chain, using ubiquinone as an electron acceptor. Essential for the catalytic activity and assembly of complex I. This is NADH-ubiquinone oxidoreductase chain 2 from Sus scrofa (Pig).